The sequence spans 179 residues: Translation initiation factor IF-3 (179 aa).

Belongs to the IF-3 family. Monomer.

The protein resides in the cytoplasm. In terms of biological role, IF-3 binds to the 30S ribosomal subunit and shifts the equilibrium between 70S ribosomes and their 50S and 30S subunits in favor of the free subunits, thus enhancing the availability of 30S subunits on which protein synthesis initiation begins. In Leptospira borgpetersenii serovar Hardjo-bovis (strain L550), this protein is Translation initiation factor IF-3.